The primary structure comprises 351 residues: Histidinol-phosphate aminotransferase (351 aa).

At Lys-213 the chain carries N6-(pyridoxal phosphate)lysine.

It belongs to the class-II pyridoxal-phosphate-dependent aminotransferase family. Histidinol-phosphate aminotransferase subfamily. In terms of assembly, homodimer. Pyridoxal 5'-phosphate is required as a cofactor.

The enzyme catalyses L-histidinol phosphate + 2-oxoglutarate = 3-(imidazol-4-yl)-2-oxopropyl phosphate + L-glutamate. The catalysed reaction is L-histidine + 2-oxoglutarate = 3-(imidazol-5-yl)pyruvate + L-glutamate. Its pathway is amino-acid biosynthesis; L-histidine biosynthesis; L-histidine from 5-phospho-alpha-D-ribose 1-diphosphate: step 7/9. This is Histidinol-phosphate aminotransferase from Caldanaerobacter subterraneus subsp. tengcongensis (strain DSM 15242 / JCM 11007 / NBRC 100824 / MB4) (Thermoanaerobacter tengcongensis).